The sequence spans 930 residues: Serine/threonine-protein kinase ATG1 (930 aa).

The 304-residue stretch at 23-326 folds into the Protein kinase domain; it reads FIIDREIGKG…FENFFAHHVV (304 aa). ATP-binding positions include 29 to 37 and lysine 52; that span reads IGKGSFAQV. The active-site Proton acceptor is the aspartate 166. 4 disordered regions span residues 336-468, 504-563, 853-874, and 904-930; these read DDIP…TEEE, GQNN…SASP, ISSG…DTEE, and NQAK…YGST. A compositionally biased stretch (basic and acidic residues) spans 337–350; it reads DIPKPPKRELETIR. Positions 377-393 are enriched in low complexity; that stretch reads SPKSPRSSPRSSTVNSS. Polar residues-rich tracts occupy residues 400–417 and 504–531; these read RQSQ…HNSG and GQNN…TTGA. The ATG13-binding stretch occupies residues 629 to 897; it reads AAQAIEEFAT…RLNMVRKKQQ (269 aa).

Belongs to the protein kinase superfamily. Ser/Thr protein kinase family. APG1/unc-51/ULK1 subfamily. In terms of assembly, homodimer. Dimerization requires the presence of ATG13. Forms a ternary complex with ATG13 and ATG17.

It localises to the cytoplasm. Its subcellular location is the preautophagosomal structure membrane. The enzyme catalyses L-seryl-[protein] + ATP = O-phospho-L-seryl-[protein] + ADP + H(+). It carries out the reaction L-threonyl-[protein] + ATP = O-phospho-L-threonyl-[protein] + ADP + H(+). Serine/threonine protein kinase involved in the cytoplasm to vacuole transport (Cvt) and found to be essential in autophagy, where it is required for the formation of autophagosomes. Involved in the clearance of protein aggregates which cannot be efficiently cleared by the proteasome. Required for selective autophagic degradation of the nucleus (nucleophagy) as well as for mitophagy which contributes to regulate mitochondrial quantity and quality by eliminating the mitochondria to a basal level to fulfill cellular energy requirements and preventing excess ROS production. Also involved in endoplasmic reticulum-specific autophagic process, in selective removal of ER-associated degradation (ERAD) substrates. Plays a key role in ATG9 and ATG23 cycling through the pre-autophagosomal structure and is necessary to promote ATG18 binding to ATG9 through phosphorylation of ATG9. Catalyzes phosphorylation of ATG4, decreasing the interaction between ATG4 and ATG8 and impairing deconjugation of PE-conjugated forms of ATG8. Contributes to conidiation by regulating the conidial levels of the conidiation-related protein CP15 and mediates fungal oxidation resistance by controlling total superoxide dismutase (SOD) activity. This is Serine/threonine-protein kinase ATG1 from Beauveria bassiana (strain ARSEF 2860) (White muscardine disease fungus).